We begin with the raw amino-acid sequence, 68 residues long: Large ribosomal subunit protein uL30 (68 aa).

The protein belongs to the universal ribosomal protein uL30 family. Part of the 50S ribosomal subunit.

The protein is Large ribosomal subunit protein uL30 of Paenarthrobacter aurescens (strain TC1).